A 293-amino-acid polypeptide reads, in one-letter code: Histone H3-like centromeric protein CSE4 (293 aa).

Acidic residues predominate over residues 132 to 141 (QDLSYDESDY). Residues 132–169 (QDLSYDESDYSDPLQEIDSNYRESPRRTTDKILKSSSK) are disordered. Basic and acidic residues predominate over residues 150–164 (SNYRESPRRTTDKIL). Residues 157–291 (RRTTDKILKS…VQLARRIRGQ (135 aa)) are H3-like.

This sequence belongs to the histone H3 family. In terms of assembly, component of centromeric nucleosomes, where DNA is wrapped around a histone octamer core. The octamer contains two molecules each of H2A, H2B, CSE4/CENPA and H4 assembled in one CSE4-H4 heterotetramer and two H2A-H2B heterodimers. Interacts with the inner kinetochore. In terms of processing, ubiquitinated. Is degraded through ubiquitin-mediated proteolysis when not protected by its association to the kinetochore.

The protein localises to the nucleus. Its subcellular location is the chromosome. It localises to the centromere. Histone H3-like nucleosomal protein that is specifically found in centromeric nucleosomes. Replaces conventional H3 in the nucleosome core of centromeric chromatin that serves as an assembly site for the inner kinetochore. Required for recruitment and assembly of kinetochore proteins, mitotic progression and chromosome segregation. May serve as an epigenetic mark that propagates centromere identity through replication and cell division. This is Histone H3-like centromeric protein CSE4 (CSE4) from Monosporozyma servazzii (Yeast).